The primary structure comprises 466 residues: Cysteine--tRNA ligase (466 aa).

Position 29 (Cys29) interacts with Zn(2+). The short motif at 31–41 is the 'HIGH' region element; sequence PTVYNYIHIGN. Zn(2+)-binding residues include Cys209, His234, and Glu238. Positions 266–270 match the 'KMSKS' region motif; that stretch reads KMSKS. Lys269 is an ATP binding site. Residue Ser270 is modified to Phosphoserine.

The protein belongs to the class-I aminoacyl-tRNA synthetase family. Monomer. Zn(2+) is required as a cofactor.

Its subcellular location is the cytoplasm. The enzyme catalyses tRNA(Cys) + L-cysteine + ATP = L-cysteinyl-tRNA(Cys) + AMP + diphosphate. The polypeptide is Cysteine--tRNA ligase (Bacillus pumilus (strain SAFR-032)).